We begin with the raw amino-acid sequence, 305 residues long: UDP-N-acetylenolpyruvoylglucosamine reductase (305 aa).

Residues 33–198 enclose the FAD-binding PCMH-type domain; sequence RVGGPAQVLF…TGGTFRGRRA (166 aa). Arginine 178 is a catalytic residue. Residue serine 227 is the Proton donor of the active site. Glutamate 297 is a catalytic residue.

This sequence belongs to the MurB family. The cofactor is FAD.

The protein localises to the cytoplasm. It catalyses the reaction UDP-N-acetyl-alpha-D-muramate + NADP(+) = UDP-N-acetyl-3-O-(1-carboxyvinyl)-alpha-D-glucosamine + NADPH + H(+). It participates in cell wall biogenesis; peptidoglycan biosynthesis. Its function is as follows. Cell wall formation. This is UDP-N-acetylenolpyruvoylglucosamine reductase from Nitrobacter hamburgensis (strain DSM 10229 / NCIMB 13809 / X14).